Here is a 149-residue protein sequence, read N- to C-terminus: SsrA-binding protein (149 aa).

This sequence belongs to the SmpB family.

The protein resides in the cytoplasm. Required for rescue of stalled ribosomes mediated by trans-translation. Binds to transfer-messenger RNA (tmRNA), required for stable association of tmRNA with ribosomes. tmRNA and SmpB together mimic tRNA shape, replacing the anticodon stem-loop with SmpB. tmRNA is encoded by the ssrA gene; the 2 termini fold to resemble tRNA(Ala) and it encodes a 'tag peptide', a short internal open reading frame. During trans-translation Ala-aminoacylated tmRNA acts like a tRNA, entering the A-site of stalled ribosomes, displacing the stalled mRNA. The ribosome then switches to translate the ORF on the tmRNA; the nascent peptide is terminated with the 'tag peptide' encoded by the tmRNA and targeted for degradation. The ribosome is freed to recommence translation, which seems to be the essential function of trans-translation. This is SsrA-binding protein from Anaplasma marginale (strain St. Maries).